Reading from the N-terminus, the 736-residue chain is ABC transporter G family member 16 (736 aa).

The region spanning 88 to 332 (LDFHDLVPWR…FAGFGNPIPE (245 aa)) is the ABC transporter domain. 125-132 (GASGSGKS) contacts ATP. 7 consecutive transmembrane segments (helical) span residues 410-430 (SVINHGGGTLAVPAFANPFWI), 449-469 (LLGMRLATVIVTGFILATVFW), 484-504 (FFAFAMSTMFYTCADALPVFL), 525-545 (VLSHAIVTFPSLIFLSLAFAV), 569-589 (ASFWSGSSFVTFLSGVVPHVM), 590-610 (LGYTIVVAILAYFLLFSGFFI), and 709-729 (LLITVGFGFLFRILFYLCLLL). The ABC transmembrane type-2 domain occupies 430-640 (IEIKTLTRRS…PYEAVLQNEF (211 aa)).

Belongs to the ABC transporter superfamily. ABCG family. Eye pigment precursor importer (TC 3.A.1.204) subfamily.

Its subcellular location is the membrane. This chain is ABC transporter G family member 16 (ABCG16), found in Arabidopsis thaliana (Mouse-ear cress).